A 180-amino-acid chain; its full sequence is Adenine phosphoribosyltransferase (180 aa).

Belongs to the purine/pyrimidine phosphoribosyltransferase family. As to quaternary structure, homodimer.

It localises to the cytoplasm. It catalyses the reaction AMP + diphosphate = 5-phospho-alpha-D-ribose 1-diphosphate + adenine. The protein operates within purine metabolism; AMP biosynthesis via salvage pathway; AMP from adenine: step 1/1. Functionally, catalyzes a salvage reaction resulting in the formation of AMP, that is energically less costly than de novo synthesis. The chain is Adenine phosphoribosyltransferase from Haemophilus influenzae (strain 86-028NP).